The chain runs to 806 residues: Mitogen-activated protein kinase 7 (806 aa).

The segment at Met-1–Ala-23 is disordered. Ala-2 is subject to N-acetylalanine. The tract at residues Ala-2–Thr-77 is required for cytoplasmic targeting. The Protein kinase domain occupies Tyr-55–Leu-347. ATP contacts are provided by residues Ile-61–Val-69 and Lys-84. Residues Gly-78–Leu-139 form a required for binding to MAP2K5 region. A necessary for oligomerization region spans residues Met-140 to Gln-406. Catalysis depends on Asp-182, which acts as the Proton acceptor. The short motif at Thr-219–Tyr-221 is the TXY element. The segment at Pro-407 to Pro-806 is may not be required for kinase activity; required to stimulate MEF2C activity. Disordered stretches follow at residues Ala-424–Asp-473 and Arg-488–Ser-727. Over residues Ser-433–Asp-443 the composition is skewed to pro residues. Composition is skewed to basic and acidic residues over residues Pro-502 to Glu-519, Arg-527 to Gly-544, and Asp-563 to Thr-573. The short motif at Arg-505 to Glu-539 is the Nuclear localization signal element. A compositionally biased stretch (pro residues) spans Pro-578–Ala-592. The span at Pro-593–Thr-603 shows a compositional bias: low complexity. The span at Val-627–Ala-643 shows a compositional bias: pro residues. Residues Thr-647 to Val-660 show a composition bias toward polar residues. The span at Pro-678–Thr-689 shows a compositional bias: pro residues. Over residues Ser-693–Ser-710 the composition is skewed to polar residues. Residue Ser-710 is modified to Phosphoserine. At Thr-723 the chain carries Phosphothreonine.

The protein belongs to the protein kinase superfamily. CMGC Ser/Thr protein kinase family. MAP kinase subfamily. In terms of assembly, interacts with MAP2K5. Forms oligomers. Interacts with MEF2A, MEF2C and MEF2D; the interaction phosphorylates the MEF2s and enhances transcriptional activity of MEF2A, MEF2C but not MEF2D. Interacts with SGK1. Interacts with PML. Interacts (via N-terminal half) with HSP90AB1-CDC37 chaperone complex in resting cells; the interaction is MAP2K5-independent and prevents MAPK7 from ubiquitination and proteasomal degradation. Interacts with STUB1/CHIP; the interaction is enhanced in the presence of IGF1 or MAP2K5 and promotes STUB1/CHIP E3 ligase activity. It depends on Mg(2+) as a cofactor. Dually phosphorylated on Thr-219 and Tyr-221, which activates the enzyme. Detected in testis, brain, kidney, lung and heart. Detected in total embryo (at protein level).

The protein localises to the cytoplasm. Its subcellular location is the nucleus. It is found in the PML body. The catalysed reaction is L-seryl-[protein] + ATP = O-phospho-L-seryl-[protein] + ADP + H(+). It carries out the reaction L-threonyl-[protein] + ATP = O-phospho-L-threonyl-[protein] + ADP + H(+). Activated by tyrosine and threonine phosphorylation. Activated in response to hyperosmolarity, hydrogen peroxide, and epidermal growth factor (EGF). In terms of biological role, plays a role in various cellular processes such as proliferation, differentiation and cell survival. The upstream activator of MAPK7 is the MAPK kinase MAP2K5. Upon activation, it translocates to the nucleus and phosphorylates various downstream targets including MEF2C. EGF activates MAPK7 through a Ras-independent and MAP2K5-dependent pathway. As part of the MAPK/ERK signaling pathway, acts as a negative regulator of apoptosis in cardiomyocytes via interaction with STUB1/CHIP and promotion of STUB1-mediated ubiquitination and degradation of ICER-type isoforms of CREM. May have a role in muscle cell differentiation. May be important for endothelial function and maintenance of blood vessel integrity. MAP2K5 and MAPK7 interact specifically with one another and not with MEK1/ERK1 or MEK2/ERK2 pathways. Phosphorylates SGK1 at Ser-78 and this is required for growth factor-induced cell cycle progression. Involved in the regulation of p53/TP53 by disrupting the PML-MDM2 interaction. The polypeptide is Mitogen-activated protein kinase 7 (Mapk7) (Mus musculus (Mouse)).